The following is a 1368-amino-acid chain: MAP3K epsilon protein kinase 1 (1368 aa).

The region spanning Y20–I274 is the Protein kinase domain. HEAT repeat units follow at residues E25–N62 and S86–I125. ATP contacts are provided by residues I26–V34 and K49. D144 acts as the Proton acceptor in catalysis. One copy of the HEAT 3 repeat lies at P218 to K256. Disordered stretches follow at residues E296–S415 and Q430–D507. The span at L351–M364 shows a compositional bias: acidic residues. Basic and acidic residues-rich tracts occupy residues S388 to T399 and S470 to P486. Polar residues predominate over residues E488 to D502. HEAT repeat units follow at residues S533 to L571, I628 to E653, N654 to L695, M699 to L737, and A750 to S788. Positions G777 to T883 are disordered. Over residues L791 to M808 the composition is skewed to polar residues. Composition is skewed to basic and acidic residues over residues D813 to S826 and S836 to R852. HEAT repeat units lie at residues E903–R940, A1025–T1063, Y1067–C1105, A1112–R1150, Q1154–N1191, L1196–K1234, R1258–L1281, A1282–R1318, and Q1348–L1368.

Belongs to the protein kinase superfamily. Ser/Thr protein kinase family. In terms of assembly, interacts with SGP1. Autophosphorylated. Expressed in both the sporophytic and the gametophytic tissues, especially in dividing cells. Mostly present in flower buds and mature flowers. Also accumulates in embryos, in roots apices, trichomes and ovule integuments.

The protein localises to the cytoplasm. The protein resides in the cytoskeleton. Its subcellular location is the microtubule organizing center. It localises to the nucleus. It is found in the nucleolus. The protein localises to the cell membrane. The enzyme catalyses L-seryl-[protein] + ATP = O-phospho-L-seryl-[protein] + ADP + H(+). It catalyses the reaction L-threonyl-[protein] + ATP = O-phospho-L-threonyl-[protein] + ADP + H(+). In terms of biological role, serine/threonine-protein kinase involved in the spatial and temporal control system organizing cortical activities in mitotic and postmitotic cells. Required for the normal functioning of the plasma membrane in developing pollen. Involved in the regulation of cell expansion, cell elongation, and embryo development. The sequence is that of MAP3K epsilon protein kinase 1 from Arabidopsis thaliana (Mouse-ear cress).